We begin with the raw amino-acid sequence, 871 residues long: Metabotropic glutamate receptor 6 (871 aa).

The first 23 residues, Met1–Gly23, serve as a signal peptide directing secretion. Topologically, residues Ala24–Trp579 are extracellular. Cysteines 51 and 93 form a disulfide. L-glutamate is bound by residues Ser148, Ala169–Thr171, and Tyr219. Disulfide bonds link Cys238–Cys530, Cys361–Cys377, Cys417–Cys424, Cys512–Cys531, Cys516–Cys534, Cys537–Cys549, and Cys552–Cys565. An N-linked (GlcNAc...) asparagine glycan is attached at Asn290. Asp301 is an L-glutamate binding site. Residue Lys394 coordinates L-glutamate. Residues Asn445 and Asn473 are each glycosylated (N-linked (GlcNAc...) asparagine). The N-linked (GlcNAc...) asparagine glycan is linked to Asn561. Residues Ala580 to Met602 form a helical membrane-spanning segment. The Cytoplasmic segment spans residues Arg603–Glu616. Residues Leu617–Ala637 form a helical membrane-spanning segment. Residues Glu638 to Arg648 are Extracellular-facing. Residues Leu649–Asn667 form a helical membrane-spanning segment. At Arg668–Gln691 the chain is on the cytoplasmic side. A helical transmembrane segment spans residues Leu692–Ala712. At Gln713–Asp742 the chain is on the extracellular side. A helical transmembrane segment spans residues Leu743–Ile764. Over Lys765–Lys777 the chain is Cytoplasmic. Residues Pro778–Thr800 traverse the membrane as a helical segment. Residues Ala801 to Thr813 are Extracellular-facing. Residues Leu814–Phe839 form a helical membrane-spanning segment. Over His840–Lys871 the chain is Cytoplasmic. Residues Arg848–Lys871 are disordered.

It belongs to the G-protein coupled receptor 3 family. Homodimer. Interacts with GPR179. Interacts with photoreceptor synaptic protein LRIT1 (via its N-terminal extracellular domain). In terms of tissue distribution, detected in the outer plexiform layer in retina (at protein level).

The protein resides in the cell membrane. The protein localises to the endoplasmic reticulum membrane. Its subcellular location is the golgi apparatus membrane. It localises to the cell projection. It is found in the dendrite. Functionally, G-protein coupled receptor for glutamate. Ligand binding causes a conformation change that triggers signaling via guanine nucleotide-binding proteins (G proteins) and modulates the activity of down-stream effectors, such as adenylate cyclase. Signaling inhibits adenylate cyclase activity. Signaling stimulates TRPM1 channel activity and Ca(2+) uptake. Required for normal vision. This chain is Metabotropic glutamate receptor 6 (Grm6), found in Mus musculus (Mouse).